The primary structure comprises 478 residues: Ribosomal RNA small subunit methyltransferase F (478 aa).

S-adenosyl-L-methionine is bound by residues 126 to 132, Glu-150, Asp-177, and Asp-195; that span reads AAAPGSK. Catalysis depends on Cys-248, which acts as the Nucleophile.

The protein belongs to the class I-like SAM-binding methyltransferase superfamily. RsmB/NOP family.

It is found in the cytoplasm. It catalyses the reaction cytidine(1407) in 16S rRNA + S-adenosyl-L-methionine = 5-methylcytidine(1407) in 16S rRNA + S-adenosyl-L-homocysteine + H(+). Its function is as follows. Specifically methylates the cytosine at position 1407 (m5C1407) of 16S rRNA. The chain is Ribosomal RNA small subunit methyltransferase F from Erwinia tasmaniensis (strain DSM 17950 / CFBP 7177 / CIP 109463 / NCPPB 4357 / Et1/99).